Reading from the N-terminus, the 556-residue chain is MKSDIEIARGAPMRPIKDIASEVGIKDEELELYGDYKAKITFDAWKRLKDKPDGNLILVTAITPTPAGEGKSTTTVGLGQALKRLGKNTMVALREPSLGPSFGVKGGAAGGGYSQVVPMEDINLHFTGDIHAITTAHNLLSAAIDNHIHQGNNLDIDARRINWRRVVDLNDRALRNTVVALGGRGNGFPREDGFDITVASEIMAILCLATDIKDLKERLSKIIIGYTRDRQPVTVADLKMQGSMAVLLKDAIKPNLVQTYENVPAFVHGGPFANIAHGCNSAMATQMGVKMSDYLVTEAGFGADLGAEKFFNIKCRFAGLNPDAAVVVATARALKMHGGVEKDNLKEENLEALEKGFENLEKHMENINKFGVPAVVAVNRFPTDTEKELELLINKCQEKGYRVALSEVFAKGGEGGEEVAKEVLDIIDSKESNFKYLYDVDKSMEEKIETIAKEIYGASDVEFTPTARRNIKQLAQKGLDQVPVCMAKTQFSFSDDPKLLGRPKDFSITVKRVRISAGAGFAVAMTGDIMTMPGLPKQPAAEEIDIDDDGQITGLF.

Residue 65-72 (TPAGEGKS) participates in ATP binding.

It belongs to the formate--tetrahydrofolate ligase family.

The enzyme catalyses (6S)-5,6,7,8-tetrahydrofolate + formate + ATP = (6R)-10-formyltetrahydrofolate + ADP + phosphate. It functions in the pathway one-carbon metabolism; tetrahydrofolate interconversion. The polypeptide is Formate--tetrahydrofolate ligase (Natranaerobius thermophilus (strain ATCC BAA-1301 / DSM 18059 / JW/NM-WN-LF)).